Reading from the N-terminus, the 316-residue chain is Transaldolase (316 aa).

Lys-132 functions as the Schiff-base intermediate with substrate in the catalytic mechanism.

This sequence belongs to the transaldolase family. Type 1 subfamily. As to quaternary structure, homodimer.

Its subcellular location is the cytoplasm. The catalysed reaction is D-sedoheptulose 7-phosphate + D-glyceraldehyde 3-phosphate = D-erythrose 4-phosphate + beta-D-fructose 6-phosphate. The protein operates within carbohydrate degradation; pentose phosphate pathway; D-glyceraldehyde 3-phosphate and beta-D-fructose 6-phosphate from D-ribose 5-phosphate and D-xylulose 5-phosphate (non-oxidative stage): step 2/3. Functionally, transaldolase is important for the balance of metabolites in the pentose-phosphate pathway. In Marinomonas sp. (strain MWYL1), this protein is Transaldolase.